The following is a 920-amino-acid chain: Dynamin-B (920 aa).

Residues 65 to 84 (NSNNNNNNNNNNKINKNNNN) are disordered. Positions 154 to 448 (EITLPQIIVV…LTKHIRDTFP (295 aa)) constitute a Dynamin-type G domain. Residues 164–171 (GSQSSGKS) are G1 motif. Residue 164–172 (GSQSSGKSS) coordinates GTP. The interval 190 to 192 (VTR) is G2 motif. Positions 204–241 (TTSRNNVNENEDEDEDDNYYDNDNDDNSLEEWGEFGHT) are disordered. Residues 212 to 236 (ENEDEDEDDNYYDNDNDDNSLEEWG) show a composition bias toward acidic residues. The segment at 290 to 293 (DLPG) is G3 motif. Positions 359–362 (TKLD) are G4 motif. GTP contacts are provided by residues 359–365 (TKLDLMD) and 390–393 (NRSQ). The tract at residues 389–392 (VNRS) is G5 motif. The interval 680 to 790 (FQSTSSTSSS…EIQIQQQQQQ (111 aa)) is disordered. 2 stretches are compositionally biased toward low complexity: residues 681–705 (QSTS…NSNP) and 724–751 (QIKQ…QKQQ). A coiled-coil region spans residues 724 to 751 (QIKQQQQQQQQQQQQSYQQQQQQQQKQQ). Residues 765 to 774 (PPSPPSPPQP) show a composition bias toward pro residues. The span at 775 to 790 (KQQQSHEIQIQQQQQQ) shows a compositional bias: low complexity. Residues 825-916 (IYLLRRLLLA…SLSQSENSDL (92 aa)) enclose the GED domain.

The protein belongs to the TRAFAC class dynamin-like GTPase superfamily. Dynamin/Fzo/YdjA family.

The protein localises to the cytoplasm. Functionally, enzyme hydrolyzing GTP. The sequence is that of Dynamin-B (dymB) from Dictyostelium discoideum (Social amoeba).